The sequence spans 231 residues: Putative N-acetylmannosamine-6-phosphate 2-epimerase (231 aa).

Belongs to the NanE family.

The enzyme catalyses an N-acyl-D-glucosamine 6-phosphate = an N-acyl-D-mannosamine 6-phosphate. It participates in amino-sugar metabolism; N-acetylneuraminate degradation; D-fructose 6-phosphate from N-acetylneuraminate: step 3/5. Functionally, converts N-acetylmannosamine-6-phosphate (ManNAc-6-P) to N-acetylglucosamine-6-phosphate (GlcNAc-6-P). This is Putative N-acetylmannosamine-6-phosphate 2-epimerase from Listeria innocua serovar 6a (strain ATCC BAA-680 / CLIP 11262).